The following is a 466-amino-acid chain: Methylenetetrahydrofolate--tRNA-(uracil-5-)-methyltransferase TrmFO (466 aa).

14–19 serves as a coordination point for FAD; sequence GGGLAG.

The protein belongs to the MnmG family. TrmFO subfamily. Requires FAD as cofactor.

Its subcellular location is the cytoplasm. The enzyme catalyses uridine(54) in tRNA + (6R)-5,10-methylene-5,6,7,8-tetrahydrofolate + NADH + H(+) = 5-methyluridine(54) in tRNA + (6S)-5,6,7,8-tetrahydrofolate + NAD(+). It carries out the reaction uridine(54) in tRNA + (6R)-5,10-methylene-5,6,7,8-tetrahydrofolate + NADPH + H(+) = 5-methyluridine(54) in tRNA + (6S)-5,6,7,8-tetrahydrofolate + NADP(+). Functionally, catalyzes the folate-dependent formation of 5-methyl-uridine at position 54 (M-5-U54) in all tRNAs. The polypeptide is Methylenetetrahydrofolate--tRNA-(uracil-5-)-methyltransferase TrmFO (Brucella abortus (strain 2308)).